Consider the following 85-residue polypeptide: ATP synthase subunit c (85 aa).

Transmembrane regions (helical) follow at residues 1–21 (MLAW…ALVG) and 53–73 (LLFA…VALI).

This sequence belongs to the ATPase C chain family. As to quaternary structure, F-type ATPases have 2 components, F(1) - the catalytic core - and F(0) - the membrane proton channel. F(1) has five subunits: alpha(3), beta(3), gamma(1), delta(1), epsilon(1). F(0) has three main subunits: a(1), b(2) and c(10-14). The alpha and beta chains form an alternating ring which encloses part of the gamma chain. F(1) is attached to F(0) by a central stalk formed by the gamma and epsilon chains, while a peripheral stalk is formed by the delta and b chains.

It localises to the cell inner membrane. F(1)F(0) ATP synthase produces ATP from ADP in the presence of a proton or sodium gradient. F-type ATPases consist of two structural domains, F(1) containing the extramembraneous catalytic core and F(0) containing the membrane proton channel, linked together by a central stalk and a peripheral stalk. During catalysis, ATP synthesis in the catalytic domain of F(1) is coupled via a rotary mechanism of the central stalk subunits to proton translocation. Its function is as follows. Key component of the F(0) channel; it plays a direct role in translocation across the membrane. A homomeric c-ring of between 10-14 subunits forms the central stalk rotor element with the F(1) delta and epsilon subunits. The chain is ATP synthase subunit c from Dictyoglomus turgidum (strain DSM 6724 / Z-1310).